Reading from the N-terminus, the 526-residue chain is Putative NipSnap protein K02D10.1 (526 aa).

The protein belongs to the NipSnap family.

The sequence is that of Putative NipSnap protein K02D10.1 from Caenorhabditis elegans.